Consider the following 314-residue polypeptide: 4-hydroxy-3-methylbut-2-enyl diphosphate reductase (314 aa).

Residue Cys12 coordinates [4Fe-4S] cluster. Residues His43 and His81 each coordinate (2E)-4-hydroxy-3-methylbut-2-enyl diphosphate. Dimethylallyl diphosphate is bound by residues His43 and His81. Isopentenyl diphosphate-binding residues include His43 and His81. A [4Fe-4S] cluster-binding site is contributed by Cys103. His131 provides a ligand contact to (2E)-4-hydroxy-3-methylbut-2-enyl diphosphate. A dimethylallyl diphosphate-binding site is contributed by His131. Residue His131 coordinates isopentenyl diphosphate. The active-site Proton donor is Glu133. Residue Thr170 coordinates (2E)-4-hydroxy-3-methylbut-2-enyl diphosphate. [4Fe-4S] cluster is bound at residue Cys198. (2E)-4-hydroxy-3-methylbut-2-enyl diphosphate contacts are provided by Ser226, Asn228, and Ser271. Dimethylallyl diphosphate-binding residues include Ser226, Asn228, and Ser271. Residues Ser226, Asn228, and Ser271 each contribute to the isopentenyl diphosphate site.

It belongs to the IspH family. The cofactor is [4Fe-4S] cluster.

The enzyme catalyses isopentenyl diphosphate + 2 oxidized [2Fe-2S]-[ferredoxin] + H2O = (2E)-4-hydroxy-3-methylbut-2-enyl diphosphate + 2 reduced [2Fe-2S]-[ferredoxin] + 2 H(+). It catalyses the reaction dimethylallyl diphosphate + 2 oxidized [2Fe-2S]-[ferredoxin] + H2O = (2E)-4-hydroxy-3-methylbut-2-enyl diphosphate + 2 reduced [2Fe-2S]-[ferredoxin] + 2 H(+). It functions in the pathway isoprenoid biosynthesis; dimethylallyl diphosphate biosynthesis; dimethylallyl diphosphate from (2E)-4-hydroxy-3-methylbutenyl diphosphate: step 1/1. The protein operates within isoprenoid biosynthesis; isopentenyl diphosphate biosynthesis via DXP pathway; isopentenyl diphosphate from 1-deoxy-D-xylulose 5-phosphate: step 6/6. Functionally, catalyzes the conversion of 1-hydroxy-2-methyl-2-(E)-butenyl 4-diphosphate (HMBPP) into a mixture of isopentenyl diphosphate (IPP) and dimethylallyl diphosphate (DMAPP). Acts in the terminal step of the DOXP/MEP pathway for isoprenoid precursor biosynthesis. The polypeptide is 4-hydroxy-3-methylbut-2-enyl diphosphate reductase (Halalkalibacterium halodurans (strain ATCC BAA-125 / DSM 18197 / FERM 7344 / JCM 9153 / C-125) (Bacillus halodurans)).